Reading from the N-terminus, the 804-residue chain is MSHADMNNCCGFNEAAAAFSWNSPKKAINPYLDPAEVAPVSALSNLITLYAADNEQEQLRREALSDQVWERYFFYESRDPVQHEMEQDKLISRAKLAHEQQRFNPDMVILADVNAQPSHISKPLMQRIEYFSSLGRPKAYSRYLRETIKPCLERLEHVRDSQLSASFRFMASHVGLDGLLILPEMSQDQVKRLSTLVAAHMSMCLDAACGDLYATDDVKPEEIRKTWEKVAAETLRLDVIPPAFEQLRRKRNRRKPVPYELIPGSLARMLCADWWYRKLWKMRCEWREEQLRAVCLVSKKASPYVSYEAVMHKREQRRKSLEFFRSHELVNEEGDTLDMEDVVNASSSNPAHRRNEMMACVKGLELIAEMRGDCAVFYTITCPSRFHSTLNNGRPNPTWTNATVRQSSDYLVGMFAAFRKAMHKAGLRWYGVRVAEPHHDGTVHWHLLCFMRKKDRRAITALLRKFAIREDREELGNNTGPRFKSELINPRKGTPTSYIAKYISKNIDGRGLAGEISKETGKSLRDNAEYVNPWASLHRVQQFRFFGIPGRQAYRELRLLAGQAARQQGDKKAGAPVLDNPRLDAILAAADAGCFATYIMRQGGVLVPRKYHLIRTAYEINEEPTAYGDHGIRIYGIWSPIAEGKICTHAVKWKMVRKAVDVQEAAADQGACAPWTRGNNCLLAENLNQQEKDKSADGNPRTDITSMDDKELHDYLHSMSKKERRELAARLRLVKPKRRKDYKQRITDHQRLQLVYELKSRGFDGSEKEVDLLLRGGSIPSGAGLRIFYRNQRLQEDDQWRNLY.

Catalysis depends on O-(5'-phospho-DNA)-tyrosine intermediate residues Y498 and Y502.

This sequence belongs to the phage GPA family.

Functionally, possible endonuclease which induces a single-strand cut and initiates DNA replication. In Shigella boydii serotype 4 (strain Sb227), this protein is Probable replication endonuclease from prophage-like region.